Consider the following 347-residue polypeptide: MRVADFHFDLPEALIARHPLPERRASRLLALDGPTGTLAHRQFADLLDYLRPGDLMVFNNTRVIPARLFGQKESGGKLEVLVERVLDQDRVLAHIRASKAPKPGTRILVEGGGSAEMLQRHDALFELAFAEPVLPLLERVGHMPLPPYIDRPDDAADRERYQTVYAQRAGAVAAPTAGLHFDEALLEAIRAKGVDTAFVTLHVGAGTFQPVRVERIEDHVMHREWLEVGQDVVDAVSVCRARGGRVVAVGTTSVRSLESAARDGELKPFSGDTDIFIYPGRPFHVVDALVTNFHLPESTLLMLVSAFAGYPETMAAYAAAVAQGYRFFSYGDAMFITRNPAPRGPED.

This sequence belongs to the QueA family. As to quaternary structure, monomer.

The protein resides in the cytoplasm. It carries out the reaction 7-aminomethyl-7-carbaguanosine(34) in tRNA + S-adenosyl-L-methionine = epoxyqueuosine(34) in tRNA + adenine + L-methionine + 2 H(+). It participates in tRNA modification; tRNA-queuosine biosynthesis. Functionally, transfers and isomerizes the ribose moiety from AdoMet to the 7-aminomethyl group of 7-deazaguanine (preQ1-tRNA) to give epoxyqueuosine (oQ-tRNA). In Pseudomonas aeruginosa (strain LESB58), this protein is S-adenosylmethionine:tRNA ribosyltransferase-isomerase.